Here is a 368-residue protein sequence, read N- to C-terminus: Left-right determination factor 1 (368 aa).

The signal sequence occupies residues 1–21; the sequence is MPFLWLCWALWALSLVSLREA. A propeptide spans 22-76 (or 135); sequence LTGEQILGSLLQQLQLDQPPVLDKADVEGMVIPSHVRTQYVALLQHSHASRSRGK. Residue Asn-158 is glycosylated (N-linked (GlcNAc...) asparagine). 4 disulfides stabilise this stretch: Cys-253/Cys-266, Cys-265/Cys-318, Cys-295/Cys-353, and Cys-299/Cys-355.

The protein belongs to the TGF-beta family. Post-translationally, the processing of the protein may also occur at the second R-X-X-R site located at AA 132-135. Processing appears to be regulated in a cell-type specific manner.

Its subcellular location is the secreted. Required for left-right axis determination as a regulator of LEFTY2 and NODAL. The sequence is that of Left-right determination factor 1 (Lefty1) from Mus musculus (Mouse).